The chain runs to 243 residues: Peptidase E (243 aa).

Active-site charge relay system residues include S118, D133, and H155.

This sequence belongs to the peptidase S51 family.

The protein localises to the cytoplasm. The enzyme catalyses Dipeptidase E catalyzes the hydrolysis of dipeptides Asp-|-Xaa. It does not act on peptides with N-terminal Glu, Asn or Gln, nor does it cleave isoaspartyl peptides.. In terms of biological role, hydrolyzes dipeptides containing N-terminal aspartate residues. May play a role in allowing the cell to use peptide aspartate to spare carbon otherwise required for the synthesis of the aspartate family of amino acids. The polypeptide is Peptidase E (Streptomyces coelicolor (strain ATCC BAA-471 / A3(2) / M145)).